Consider the following 298-residue polypeptide: Phosphatidylglycerol--prolipoprotein diacylglyceryl transferase (298 aa).

3 consecutive transmembrane segments (helical) span residues 17 to 37, 59 to 79, and 97 to 117; these read LAVRWYGLMYLVGFIAAIVVG, MMFYGVLGTVLGGRLGYVLFY, and GGMSFHGGFLGVTLAMMLFAW. Arginine 142 is a binding site for a 1,2-diacyl-sn-glycero-3-phospho-(1'-sn-glycerol). Helical transmembrane passes span 230–250 and 257–277; these read MGAISALFLIGYGLARFTVEF and FLGLLALGLSMGQWLSLPMIV.

It belongs to the Lgt family.

Its subcellular location is the cell inner membrane. The enzyme catalyses L-cysteinyl-[prolipoprotein] + a 1,2-diacyl-sn-glycero-3-phospho-(1'-sn-glycerol) = an S-1,2-diacyl-sn-glyceryl-L-cysteinyl-[prolipoprotein] + sn-glycerol 1-phosphate + H(+). It participates in protein modification; lipoprotein biosynthesis (diacylglyceryl transfer). Its function is as follows. Catalyzes the transfer of the diacylglyceryl group from phosphatidylglycerol to the sulfhydryl group of the N-terminal cysteine of a prolipoprotein, the first step in the formation of mature lipoproteins. The polypeptide is Phosphatidylglycerol--prolipoprotein diacylglyceryl transferase (Burkholderia cenocepacia (strain ATCC BAA-245 / DSM 16553 / LMG 16656 / NCTC 13227 / J2315 / CF5610) (Burkholderia cepacia (strain J2315))).